The chain runs to 126 residues: Holo-[acyl-carrier-protein] synthase (126 aa).

Mg(2+) is bound by residues Asp-9 and Glu-58.

The protein belongs to the P-Pant transferase superfamily. AcpS family. Mg(2+) is required as a cofactor.

Its subcellular location is the cytoplasm. It carries out the reaction apo-[ACP] + CoA = holo-[ACP] + adenosine 3',5'-bisphosphate + H(+). Its function is as follows. Transfers the 4'-phosphopantetheine moiety from coenzyme A to a Ser of acyl-carrier-protein. The polypeptide is Holo-[acyl-carrier-protein] synthase (Escherichia coli O139:H28 (strain E24377A / ETEC)).